Consider the following 898-residue polypeptide: Serine/threonine-protein kinase TAO3 (898 aa).

Positions 24 to 277 constitute a Protein kinase domain; sequence FIDLHEIGHG…AAELLRHDFI (254 aa). Residues 30–38 and Lys53 each bind ATP; that span reads IGHGSFGAV. Asp147 serves as the catalytic Proton acceptor. Disordered regions lie at residues 316-372 and 405-424; these read TRNG…EVMD and DEAGHGDPRPEPRPTQSVQS. 5 positions are modified to phosphoserine: Ser324, Ser331, Ser343, Ser346, and Ser349. Residues 349–366 are compositionally biased toward low complexity; it reads SIPSVSVSTGSRSSSVNS. Residue Thr357 is modified to Phosphothreonine. At Ser359 the chain carries Phosphoserine. Basic and acidic residues predominate over residues 405-416; it reads DEAGHGDPRPEP. The residue at position 442 (Ser442) is a Phosphoserine. 3 coiled-coil regions span residues 452–502, 548–649, and 753–871; these read EQEN…THAN, FLES…HAML, and ILKT…QERE. Residues 565–596 form a disordered region; sequence EEMNEDHSTPKKEKQERISKHKENLQHTQAEE. Lys830 carries the N6-acetyllysine modification.

Belongs to the protein kinase superfamily. STE Ser/Thr protein kinase family. STE20 subfamily. As to quaternary structure, self-associates. Interacts with ERN1 and TRAF2. Interaction with TRAF2 is facilitated under ER stress conditions, such as treatment with tunicamycin, and may promote TRAF2 phosphorylation. Interacts (via N-terminus) with STK25; the interaction promotes STK25 abundance at the level of protein expression and/or stability. In terms of processing, autophosphorylated. Phosphorylation at Ser-324 by ATM following DNA damage is required for activation of the p38/MAPK14 stress-activated MAPK cascade. Phosphorylated at Ser-324 and on Tyr residues during T cell activation. Phosphorylated by LRRK2. As to expression, ubiquitously expressed, with a higher expression in the retina.

The protein resides in the cytoplasm. It localises to the cell membrane. The protein localises to the membrane raft. Its subcellular location is the lipid droplet. The enzyme catalyses L-seryl-[protein] + ATP = O-phospho-L-seryl-[protein] + ADP + H(+). The catalysed reaction is L-threonyl-[protein] + ATP = O-phospho-L-threonyl-[protein] + ADP + H(+). Functionally, serine/threonine-protein kinase that acts as a regulator of the p38/MAPK14 stress-activated MAPK cascade and of the MAPK8/JNK cascade. In response to DNA damage, involved in the G2/M transition DNA damage checkpoint by activating the p38/MAPK14 stress-activated MAPK cascade, probably by mediating phosphorylation of upstream MAP2K3 and MAP2K6 kinases. Inhibits basal activity of the MAPK8/JNK cascade and diminishes its activation in response to epidermal growth factor (EGF). Positively regulates canonical T cell receptor (TCR) signaling by preventing early PTPN6/SHP1-mediated inactivation of LCK, ensuring sustained TCR signaling that is required for optimal activation and differentiation of T cells. Phosphorylates PTPN6/SHP1 on 'Thr-396', leading to its polyubiquitination and subsequent proteasomal degradation. Required for cell surface expression of metalloprotease ADAM10 on type 1 transitional B cells which is necessary for their NOTCH-mediated development into marginal zone B cells. Also required for the NOTCH-mediated terminal differentiation of splenic conventional type 2 dendritic cells. Positively regulates osteoblast differentiation by acting as an upstream activator of the JNK pathway. Promotes JNK signaling in hepatocytes and positively regulates hepatocyte lipid storage by inhibiting beta-oxidation and triacylglycerol secretion while enhancing lipid synthesis. Restricts age-associated inflammation by negatively regulating differentiation of macrophages and their production of pro-inflammatory cytokines. Plays a role in negatively regulating the abundance of regulatory T cells in white adipose tissue. The protein is Serine/threonine-protein kinase TAO3 (Taok3) of Rattus norvegicus (Rat).